The primary structure comprises 97 residues: Defensin-like protein 196 (97 aa).

The first 28 residues, 1-28, serve as a signal peptide directing secretion; sequence MAKMSALSIFAIFIILVLVIFEIPEIEA. 4 disulfide bridges follow: C33/C85, C46/C70, C55/C80, and C59/C82.

The protein belongs to the DEFL family. Protease inhibitor I18 (RTI/MTI-2) subfamily.

The protein resides in the secreted. The polypeptide is Defensin-like protein 196 (ATTI4) (Arabidopsis thaliana (Mouse-ear cress)).